The chain runs to 174 residues: Gamma-crystallin C (174 aa).

Beta/gamma crystallin 'Greek key' domains follow at residues 2–40 (GKIT…RVES) and 41–83 (GCWM…CLIP). Cys-23 is modified (S-methylcysteine). The tract at residues 84-87 (QTVS) is connecting peptide. 2 consecutive Beta/gamma crystallin 'Greek key' domains span residues 88–128 (HRLR…HVLE) and 129–171 (GCWV…RRVV).

It belongs to the beta/gamma-crystallin family. As to quaternary structure, monomer.

Crystallins are the dominant structural components of the vertebrate eye lens. This is Gamma-crystallin C (CRYGC) from Homo sapiens (Human).